Here is a 190-residue protein sequence, read N- to C-terminus: UPF0316 protein Mboo_0605 (190 aa).

A run of 3 helical transmembrane segments spans residues Ile-3–Glu-23, Leu-41–Leu-61, and Phe-67–Ile-87.

This sequence belongs to the UPF0316 family.

The protein localises to the cell membrane. This Methanoregula boonei (strain DSM 21154 / JCM 14090 / 6A8) protein is UPF0316 protein Mboo_0605.